We begin with the raw amino-acid sequence, 101 residues long: Urease subunit beta (101 aa).

This sequence belongs to the urease beta subunit family. Heterotrimer of UreA (gamma), UreB (beta) and UreC (alpha) subunits. Three heterotrimers associate to form the active enzyme.

It is found in the cytoplasm. It carries out the reaction urea + 2 H2O + H(+) = hydrogencarbonate + 2 NH4(+). Its pathway is nitrogen metabolism; urea degradation; CO(2) and NH(3) from urea (urease route): step 1/1. This is Urease subunit beta from Cupriavidus metallidurans (strain ATCC 43123 / DSM 2839 / NBRC 102507 / CH34) (Ralstonia metallidurans).